The chain runs to 101 residues: Small ribosomal subunit protein uS14 (101 aa).

The tract at residues 32-62 is disordered; it reads GDAKRSDAEREAARLGLQKLPRNANPTRQRN. The span at 33–44 shows a compositional bias: basic and acidic residues; the sequence is DAKRSDAEREAA.

This sequence belongs to the universal ribosomal protein uS14 family. As to quaternary structure, part of the 30S ribosomal subunit. Contacts proteins S3 and S10.

Binds 16S rRNA, required for the assembly of 30S particles and may also be responsible for determining the conformation of the 16S rRNA at the A site. This is Small ribosomal subunit protein uS14 from Verminephrobacter eiseniae (strain EF01-2).